A 316-amino-acid polypeptide reads, in one-letter code: M-phase inducer phosphatase cdc-25.3 (316 aa).

Positions 35-65 (QNRQHSSAISHISNSSPPTRKRSIDGGYTSG) are disordered. The span at 39 to 50 (HSSAISHISNSS) shows a compositional bias: low complexity. Residues 136-242 (FMQKYILIDC…FYAFTRGLEK (107 aa)) form the Rhodanese domain.

This sequence belongs to the MPI phosphatase family.

It catalyses the reaction O-phospho-L-tyrosyl-[protein] + H2O = L-tyrosyl-[protein] + phosphate. The chain is M-phase inducer phosphatase cdc-25.3 (cdc-25.3) from Caenorhabditis elegans.